Consider the following 277-residue polypeptide: Uracil phosphoribosyltransferase homolog (277 aa).

The interval 1 to 69 (MEAMPCHNQR…AAAPSPAAED (69 aa)) is disordered. The span at 37–69 (AEPSEGSSSGSPSPDSSSGSNGAAAAPSPAAED) shows a compositional bias: low complexity. GTP-binding positions include R101, R110, and 144 to 147 (EKGN). R154 serves as a coordination point for 5-phospho-alpha-D-ribose 1-diphosphate. 2 residues coordinate GTP: R171 and R200. 206-214 (YPILSTGNT) is a binding site for 5-phospho-alpha-D-ribose 1-diphosphate. Uracil is bound at residue 267–269 (THF).

Belongs to the UPRTase family.

The protein resides in the cytoplasm. It is found in the nucleus. In Gallus gallus (Chicken), this protein is Uracil phosphoribosyltransferase homolog (UPRT).